The sequence spans 321 residues: Phosphopantothenate--cysteine ligase 1 (321 aa).

This sequence belongs to the PPC synthetase family. As to quaternary structure, homodimer.

The catalysed reaction is (R)-4'-phosphopantothenate + L-cysteine + CTP = N-[(R)-4-phosphopantothenoyl]-L-cysteine + CMP + diphosphate + H(+). It participates in cofactor biosynthesis; coenzyme A biosynthesis; CoA from (R)-pantothenate: step 2/5. Functionally, catalyzes the first step in the biosynthesis of coenzyme A from vitamin B5, where cysteine is conjugated to 4'-phosphopantothenate to form 4-phosphopantothenoylcysteine. The protein is Phosphopantothenate--cysteine ligase 1 of Oryza sativa subsp. japonica (Rice).